We begin with the raw amino-acid sequence, 441 residues long: Putative transporter AmpG 1 (441 aa).

The next 12 membrane-spanning stretches (helical) occupy residues 5 to 25 (SHLL…MITG), 42 to 62 (IGIL…APIF), 78 to 98 (LSWI…FSFL), 104 to 124 (LVLF…QDTI), 143 to 163 (GIYI…AIYL), 171 to 191 (EIYK…IVAA), 249 to 269 (SGND…LVLY), 297 to 317 (VGKF…GFIM), 325 to 345 (SIFL…FLEI), 352 to 372 (LLFI…TAYI), 390 to 410 (FLSS…GYMV), and 413 to 433 (FGWQ…LLIL).

Belongs to the major facilitator superfamily.

The protein localises to the cell inner membrane. The sequence is that of Putative transporter AmpG 1 (ampG1) from Rickettsia felis (strain ATCC VR-1525 / URRWXCal2) (Rickettsia azadi).